Consider the following 980-residue polypeptide: Valine--tRNA ligase (980 aa).

Residues 43-53 (PNVTGTLHMGH) carry the 'HIGH' region motif. The short motif at 586–590 (KMSKS) is the 'KMSKS' region element. Lysine 589 contributes to the ATP binding site. A coiled-coil region spans residues 914–978 (LVDMDAERTR…QLTGLREQRA (65 aa)).

The protein belongs to the class-I aminoacyl-tRNA synthetase family. ValS type 1 subfamily. As to quaternary structure, monomer.

It is found in the cytoplasm. It carries out the reaction tRNA(Val) + L-valine + ATP = L-valyl-tRNA(Val) + AMP + diphosphate. Its function is as follows. Catalyzes the attachment of valine to tRNA(Val). As ValRS can inadvertently accommodate and process structurally similar amino acids such as threonine, to avoid such errors, it has a 'posttransfer' editing activity that hydrolyzes mischarged Thr-tRNA(Val) in a tRNA-dependent manner. The sequence is that of Valine--tRNA ligase from Xanthomonas euvesicatoria pv. vesicatoria (strain 85-10) (Xanthomonas campestris pv. vesicatoria).